We begin with the raw amino-acid sequence, 1104 residues long: Extended synaptotagmin-1 (1104 aa).

Met1 carries the N-acetylmethionine modification. Residues Met1–Ser38 are Cytoplasmic-facing. The segment at Met1–Ala47 is disordered. Residues Asp15 to Thr24 are compositionally biased toward polar residues. Over residues Gly37–Ala47 the composition is skewed to gly residues. Residues Gly39–Gly59 traverse the membrane as a helical segment. Over Lys60 to Leu62 the chain is Lumenal. The helical transmembrane segment at Leu63 to Phe83 threads the bilayer. At Gly84–Ser1104 the chain is on the cytoplasmic side. Residues Trp91 to Thr116 are a coiled coil. Positions Asp135–Val313 constitute an SMP-LTD domain. C2 domains lie at Leu312–Phe433, Gln460–Ser580, Ser627–Leu751, and Leu777–Ser899. The residue at position 324 (Ser324) is a Phosphoserine; by CDK5. Positions 344, 345, 357, 404, 406, 408, 410, and 411 each coordinate Ca(2+). Disordered regions lie at residues Val617–Ser641, Arg813–Lys833, and Ser924–Ser950. Lys817 carries the N6-acetyllysine modification. 2 positions are modified to phosphoserine: Ser820 and Ser941. Over residues His925 to His946 the composition is skewed to low complexity. Thr948 is subject to Phosphothreonine. Phosphoserine occurs at positions 949 and 963. A C2 5 domain is found at Pro971 to Tyr1093. Tyr1009 bears the Phosphotyrosine mark. The interval Lys1018 to Lys1025 is required for phosphatidylinositol 4,5-bisphosphate-dependent location at the cell membrane. Ser1034 carries the phosphoserine modification.

This sequence belongs to the extended synaptotagmin family. As to quaternary structure, interacts with ESYT2 and ESYT3. Interacts with ADGRD1; inhibiting the G-protein-coupled receptor activity of ADGRD1. Interaction with ADGRD1 is abolished when cytosolic calcium increases, relieving ADGRD1 G-protein-coupled receptor activity. Interacts (phosphorylated form) with SLC2A4. Phosphorylated on Ser residues in insulin-treated adipocytes (in vitro); this promotes interaction with SLC2A4.

Its subcellular location is the endoplasmic reticulum membrane. The protein resides in the cell membrane. Binds calcium (via the C2 domains) and translocates to sites of contact between the endoplasmic reticulum and the cell membrane in response to increased cytosolic calcium levels. Helps tether the endoplasmic reticulum to the cell membrane and promotes the formation of appositions between the endoplasmic reticulum and the cell membrane. Acts as an inhibitor of ADGRD1 G-protein-coupled receptor activity in absence of cytosolic calcium. Binds glycerophospholipids in a barrel-like domain and may play a role in cellular lipid transport. In Pongo abelii (Sumatran orangutan), this protein is Extended synaptotagmin-1 (ESYT1).